A 318-amino-acid polypeptide reads, in one-letter code: Protoheme IX farnesyltransferase (318 aa).

9 helical membrane passes run I31–L51, L55–C75, I98–L118, L125–L145, I153–G173, I181–I201, A206–A228, L238–L260, and F285–A305.

Belongs to the UbiA prenyltransferase family. Protoheme IX farnesyltransferase subfamily.

The protein localises to the cell inner membrane. It carries out the reaction heme b + (2E,6E)-farnesyl diphosphate + H2O = Fe(II)-heme o + diphosphate. It functions in the pathway porphyrin-containing compound metabolism; heme O biosynthesis; heme O from protoheme: step 1/1. Functionally, converts heme B (protoheme IX) to heme O by substitution of the vinyl group on carbon 2 of heme B porphyrin ring with a hydroxyethyl farnesyl side group. In Synechococcus elongatus (strain ATCC 33912 / PCC 7942 / FACHB-805) (Anacystis nidulans R2), this protein is Protoheme IX farnesyltransferase.